The sequence spans 104 residues: Small ribosomal subunit protein uS10 (104 aa).

The protein belongs to the universal ribosomal protein uS10 family. As to quaternary structure, part of the 30S ribosomal subunit.

Its function is as follows. Involved in the binding of tRNA to the ribosomes. This chain is Small ribosomal subunit protein uS10, found in Helicobacter pylori (strain P12).